Consider the following 199-residue polypeptide: dITP/XTP pyrophosphatase (199 aa).

Thr-8–Lys-13 lines the substrate pocket. Asp-68 functions as the Proton acceptor in the catalytic mechanism. Asp-68 provides a ligand contact to Mg(2+). Substrate contacts are provided by residues Ser-69, Phe-155–Asp-158, Lys-177, and His-182–Arg-183.

The protein belongs to the HAM1 NTPase family. In terms of assembly, homodimer. The cofactor is Mg(2+).

It carries out the reaction XTP + H2O = XMP + diphosphate + H(+). It catalyses the reaction dITP + H2O = dIMP + diphosphate + H(+). The catalysed reaction is ITP + H2O = IMP + diphosphate + H(+). Pyrophosphatase that catalyzes the hydrolysis of nucleoside triphosphates to their monophosphate derivatives, with a high preference for the non-canonical purine nucleotides XTP (xanthosine triphosphate), dITP (deoxyinosine triphosphate) and ITP. Seems to function as a house-cleaning enzyme that removes non-canonical purine nucleotides from the nucleotide pool, thus preventing their incorporation into DNA/RNA and avoiding chromosomal lesions. This chain is dITP/XTP pyrophosphatase, found in Borrelia duttonii (strain Ly).